Reading from the N-terminus, the 372-residue chain is MEYGLDLEYSFNEFLKGFGLSSEIAHIIWLPLPMLLVLVAAVVGVLVTVWLERKISAAAQQRIGPEYAGALGVLQPIADGLKLLVKEDIIPAKADGILFTAGPILVLVPVILSWLIVPFGQNLLISNVGIGIFLWIALSSIQPIGLLMSGYASNNKYSLLGGLRAAAQSISYEIPLALSVLAIVLMTNSLSTIDIVNQQSGAGILSWNIWRQPVGFIVFWICALAECERLPFDLPEAEEELVAGYQTEYAGMKFALFYLGSYINLILSALLVSILYLGGWGFPVPVELIAKFLNLPINAPFLQVFTASIGIVMTVLKAYLLVFIAILLRWTTPRVRIDQLLDLGWKFLLPISLANLLITAGLKLAFPQFFGG.

8 helical membrane-spanning segments follow: residues 27 to 47 (IIWLPLPMLLVLVAAVVGVLV), 97 to 117 (ILFTAGPILVLVPVILSWLIV), 128 to 148 (VGIGIFLWIALSSIQPIGLLM), 176 to 196 (LALSVLAIVLMTNSLSTIDIV), 204 to 224 (ILSWNIWRQPVGFIVFWICAL), 266 to 286 (ILSALLVSILYLGGWGFPVPV), 308 to 328 (SIGIVMTVLKAYLLVFIAILL), and 347 to 367 (FLLPISLANLLITAGLKLAFP).

Belongs to the complex I subunit 1 family. In terms of assembly, NDH-1 is composed of at least 11 different subunits.

The protein resides in the cellular thylakoid membrane. It catalyses the reaction a plastoquinone + NADH + (n+1) H(+)(in) = a plastoquinol + NAD(+) + n H(+)(out). The enzyme catalyses a plastoquinone + NADPH + (n+1) H(+)(in) = a plastoquinol + NADP(+) + n H(+)(out). Its function is as follows. NDH-1 shuttles electrons from an unknown electron donor, via FMN and iron-sulfur (Fe-S) centers, to quinones in the respiratory and/or the photosynthetic chain. The immediate electron acceptor for the enzyme in this species is believed to be plastoquinone. Couples the redox reaction to proton translocation, and thus conserves the redox energy in a proton gradient. The polypeptide is NAD(P)H-quinone oxidoreductase subunit 1 (Prochlorococcus marinus (strain AS9601)).